A 94-amino-acid chain; its full sequence is Integration host factor subunit beta (94 aa).

It belongs to the bacterial histone-like protein family. In terms of assembly, heterodimer of an alpha and a beta chain.

In terms of biological role, this protein is one of the two subunits of integration host factor, a specific DNA-binding protein that functions in genetic recombination as well as in transcriptional and translational control. In Sodalis glossinidius (strain morsitans), this protein is Integration host factor subunit beta.